Here is a 385-residue protein sequence, read N- to C-terminus: Cytochrome b (385 aa).

4 helical membrane passes run 32–52 (FGALAAFCLGIQIVTGIFLAM), 76–98 (WLIRYIHANGASFFFICVYIHVF), 113–133 (LWNLGVTILIVMILTAFLGYV), and 179–199 (FFSLHYLLPFVIALLSLIHVA). H82 and H96 together coordinate heme b. Heme b contacts are provided by H183 and H197. H202 is an a ubiquinone binding site. The next 4 membrane-spanning stretches (helical) occupy residues 226 to 246 (FIFKDLLGIIFFLIVFCYAVF), 290 to 310 (LGGVITLGLALIVLFLLPFIT), 322 to 342 (SKTILFWSFFSVCVLLGWIGF), and 349 to 369 (YLMLGQMLTVLYFFYFFSLAV).

Belongs to the cytochrome b family. In terms of assembly, the main subunits of complex b-c1 are: cytochrome b, cytochrome c1 and the Rieske protein. It depends on heme b as a cofactor.

Its subcellular location is the mitochondrion inner membrane. Functionally, component of the ubiquinol-cytochrome c reductase complex (complex III or cytochrome b-c1 complex) that is part of the mitochondrial respiratory chain. The b-c1 complex mediates electron transfer from ubiquinol to cytochrome c. Contributes to the generation of a proton gradient across the mitochondrial membrane that is then used for ATP synthesis. In Acanthamoeba castellanii (Amoeba), this protein is Cytochrome b (MT-CYB).